Consider the following 173-residue polypeptide: Adenine phosphoribosyltransferase (173 aa).

This sequence belongs to the purine/pyrimidine phosphoribosyltransferase family. Homodimer.

The protein resides in the cytoplasm. It catalyses the reaction AMP + diphosphate = 5-phospho-alpha-D-ribose 1-diphosphate + adenine. It functions in the pathway purine metabolism; AMP biosynthesis via salvage pathway; AMP from adenine: step 1/1. Its function is as follows. Catalyzes a salvage reaction resulting in the formation of AMP, that is energically less costly than de novo synthesis. This chain is Adenine phosphoribosyltransferase, found in Petrotoga mobilis (strain DSM 10674 / SJ95).